The sequence spans 261 residues: Expansin-B2 (261 aa).

The signal sequence occupies residues 1–24; sequence MAGASAKVVAMLLSVLATYGFAAG. Residues 51-157 enclose the Expansin-like EG45 domain; it reads GGACGFKNTN…RRVPCYHRGL (107 aa). Cystine bridges form between Cys54/Cys82, Cys85/Cys152, and Cys90/Cys96. In terms of domain architecture, Expansin-like CBD spans 170-256; it reads VYLAVLVEFA…NWRANTNYGS (87 aa).

Belongs to the expansin family. Expansin B subfamily. Expressed in roots.

Its subcellular location is the secreted. The protein localises to the cell wall. It localises to the membrane. May cause loosening and extension of plant cell walls by disrupting non-covalent bonding between cellulose microfibrils and matrix glucans. No enzymatic activity has been found. May be required for rapid internodal elongation in deepwater rice during submergence. This is Expansin-B2 (EXPB2) from Oryza sativa subsp. japonica (Rice).